The sequence spans 580 residues: Jasmonoyl--L-amino acid synthetase JAR6 (580 aa).

Ser-100 serves as a coordination point for ATP. Ser-103 contributes to the jasmonate binding site. ATP-binding positions include Met-120, Thr-123, Gly-164, Asn-169, and 332–337; that span reads GSSEGW. 167–171 contacts an L-alpha-amino acid; sequence TTNVY. Jasmonate is bound at residue 329–332; the sequence is ADYG. Residue 534–538 participates in an L-alpha-amino acid binding; it reads KILDH.

This sequence belongs to the IAA-amido conjugating enzyme family.

The catalysed reaction is a jasmonate + an L-alpha-amino acid + ATP = a jasmonyl-L-amino acid + AMP + diphosphate + H(+). Functionally, catalyzes the synthesis of jasmonate-amino acid conjugates by adenylation. Catalyzes the conjugation of jasmonate (JA) to Ile, Leu and Val. Catalyzes the conjugation of JA to Ile that may mediate defense signaling and resistance to the herbivore Manduca sexta caterpillars. This chain is Jasmonoyl--L-amino acid synthetase JAR6 (JAR6), found in Nicotiana attenuata (Coyote tobacco).